Here is a 546-residue protein sequence, read N- to C-terminus: MGLICGLAIASGLTVTIPSEAQTISVNEFFPPVNRYQLGASNLGNGVNQVTSVAELRDVQPSDWAFAALQSLVERYGCLVGYPDRTYRGDAEGTLRARPLSRYEFAAGLNACLNTIEQLLQENVSVAQGDLDLLKKLAQDFQAELKQLAVRVDNLETRTAFLEDHQFSVTTKLYGQTITSLDKVFGDRVGGGSNEFQTQFAYRVRFNLETSFTGKDLFRTRLQFSNFLNGVEQTGTNMTRFNYDDNSNNNVEVSHLWYRTPLTDNLTLRLGTVGVGYTDLVDTLTPPTIADDALGIPSRFGEYDPVYRRGGGGAGFNWQITPTVQLSVGYLATNPNDPDPGNGLFNGGYHTLAQLAYQTADGGIGFTYSRSYFPAGNTDLMAGTGSLLAIQPFGEVIATAGNFYTLQGYYRITPHVQIHGWGGFVEAQAQGGGLSNLSNGVGGTVLRDVSWNSSAIWYGLVGISFPDVGGEGNLPGIALGIPPTVTASNLPGAVGQTTPYHLEAFYRIQLNDNISITPGFWVVLNPEANSNNATQYVGHIRTSFLF.

The region spanning 52-123 is the SLH domain; sequence SVAELRDVQP…NTIEQLLQEN (72 aa).

This sequence belongs to the OprB family.

This is an uncharacterized protein from Synechocystis sp. (strain ATCC 27184 / PCC 6803 / Kazusa).